The primary structure comprises 252 residues: Trans-aconitate 2-methyltransferase (252 aa).

The protein belongs to the methyltransferase superfamily. Tam family.

It localises to the cytoplasm. The catalysed reaction is trans-aconitate + S-adenosyl-L-methionine = (E)-3-(methoxycarbonyl)pent-2-enedioate + S-adenosyl-L-homocysteine. Catalyzes the S-adenosylmethionine monomethyl esterification of trans-aconitate. This is Trans-aconitate 2-methyltransferase from Enterobacter sp. (strain 638).